The primary structure comprises 359 residues: 3-dehydroquinate synthase (359 aa).

NAD(+)-binding positions include 71–76, 105–109, 129–130, lysine 142, lysine 151, and 169–172; these read DGEQFK, GVIGD, TT, and CLQT. Zn(2+)-binding residues include glutamate 184, histidine 247, and histidine 264.

It belongs to the sugar phosphate cyclases superfamily. Dehydroquinate synthase family. The cofactor is Co(2+). It depends on Zn(2+) as a cofactor. NAD(+) is required as a cofactor.

It is found in the cytoplasm. The catalysed reaction is 7-phospho-2-dehydro-3-deoxy-D-arabino-heptonate = 3-dehydroquinate + phosphate. The protein operates within metabolic intermediate biosynthesis; chorismate biosynthesis; chorismate from D-erythrose 4-phosphate and phosphoenolpyruvate: step 2/7. In terms of biological role, catalyzes the conversion of 3-deoxy-D-arabino-heptulosonate 7-phosphate (DAHP) to dehydroquinate (DHQ). This chain is 3-dehydroquinate synthase, found in Shewanella sp. (strain MR-4).